The chain runs to 326 residues: 3-oxopimeloyl-[acyl-carrier-protein] synthase (326 aa).

Catalysis depends on residues cysteine 115 and histidine 253. Residues 254–258 (QANIR) form an ACP-binding region. Asparagine 283 is a catalytic residue.

The protein belongs to the thiolase-like superfamily. BioZ family.

It catalyses the reaction malonyl-[ACP] + an acyl-CoA + H(+) = a 3-oxoacyl-[ACP] + CO2 + CoA. The enzyme catalyses glutaryl-CoA + malonyl-[ACP] + H(+) = 3-oxo-6-carboxyhexanoyl-[ACP] + CO2 + CoA. The protein operates within cofactor biosynthesis; biotin biosynthesis. Functionally, involved in the formation of the biotin precursor pimeloyl-ACP. Catalyzes the condensation of glutaryl-CoA, an intermediate in lysine degradation, with malonyl-ACP to produce 3-oxopimeloyl-ACP. The chain is 3-oxopimeloyl-[acyl-carrier-protein] synthase from Brucella abortus (strain 2308).